The primary structure comprises 228 residues: uncharacterized protein (228 aa).

The signal sequence occupies residues 1 to 19; it reads MYRYTWLLWWITILLRIQQ. Residues asparagine 41, asparagine 93, asparagine 100, asparagine 128, and asparagine 164 are each glycosylated (N-linked (GlcNAc...) asparagine; by host). The helical transmembrane segment at 189 to 209 threads the bilayer; it reads MWIIPLVIVTTIIVLICFKFP.

This sequence belongs to the HHV-5 UL9 family.

Its subcellular location is the host membrane. This is an uncharacterized protein from Homo sapiens (Human).